A 268-amino-acid chain; its full sequence is Thiazole synthase (268 aa).

Lysine 96 (schiff-base intermediate with DXP) is an active-site residue. Residues glycine 157, 185–186 (AG), and 207–208 (NT) contribute to the 1-deoxy-D-xylulose 5-phosphate site. Residues 238–268 (PMRPREAASPSSPVEGVPFTPTGPRPGRGPQ) form a disordered region. Residues 258–268 (PTGPRPGRGPQ) show a composition bias toward pro residues.

It belongs to the ThiG family. As to quaternary structure, homotetramer. Forms heterodimers with either ThiH or ThiS.

Its subcellular location is the cytoplasm. The enzyme catalyses [ThiS sulfur-carrier protein]-C-terminal-Gly-aminoethanethioate + 2-iminoacetate + 1-deoxy-D-xylulose 5-phosphate = [ThiS sulfur-carrier protein]-C-terminal Gly-Gly + 2-[(2R,5Z)-2-carboxy-4-methylthiazol-5(2H)-ylidene]ethyl phosphate + 2 H2O + H(+). It functions in the pathway cofactor biosynthesis; thiamine diphosphate biosynthesis. Its function is as follows. Catalyzes the rearrangement of 1-deoxy-D-xylulose 5-phosphate (DXP) to produce the thiazole phosphate moiety of thiamine. Sulfur is provided by the thiocarboxylate moiety of the carrier protein ThiS. In vitro, sulfur can be provided by H(2)S. This Thermus thermophilus (strain ATCC BAA-163 / DSM 7039 / HB27) protein is Thiazole synthase.